The sequence spans 129 residues: Phosphoribosyl-AMP cyclohydrolase (129 aa).

Residue Asp-85 coordinates Mg(2+). Cys-86 contacts Zn(2+). Residues Asp-87 and Asp-89 each contribute to the Mg(2+) site. 2 residues coordinate Zn(2+): Cys-102 and Cys-109.

It belongs to the PRA-CH family. In terms of assembly, homodimer. Mg(2+) serves as cofactor. The cofactor is Zn(2+).

The protein localises to the cytoplasm. It catalyses the reaction 1-(5-phospho-beta-D-ribosyl)-5'-AMP + H2O = 1-(5-phospho-beta-D-ribosyl)-5-[(5-phospho-beta-D-ribosylamino)methylideneamino]imidazole-4-carboxamide. Its pathway is amino-acid biosynthesis; L-histidine biosynthesis; L-histidine from 5-phospho-alpha-D-ribose 1-diphosphate: step 3/9. Its function is as follows. Catalyzes the hydrolysis of the adenine ring of phosphoribosyl-AMP. The sequence is that of Phosphoribosyl-AMP cyclohydrolase from Methanococcus maripaludis (strain C6 / ATCC BAA-1332).